Reading from the N-terminus, the 619-residue chain is Probable serine/threonine-protein kinase WNK8 (619 aa).

Positions 1-14 (MSGARRCGDRRSER) are enriched in basic and acidic residues. Residues 1–30 (MSGARRCGDRRSERSSVVGDNRNGYVETDP) form a disordered region. The 257-residue stretch at 35–291 (GRLSEVLGKG…AEELLLDPFL (257 aa)) folds into the Protein kinase domain. ATP-binding positions include 115–118 (TELF) and K163. Catalysis depends on D180, which acts as the Proton acceptor. 4 disordered regions span residues 293–335 (PPQN…AKTT), 419–464 (YADD…PGPH), 508–555 (CSAS…SMVD), and 585–619 (GFRDPTTYGSSSSSSSSQHRRRSSSKVDHKHHYMF). Residues 419–428 (YADDDDDDDV) show a composition bias toward acidic residues. Over residues 439-448 (SSSPTSSQGS) the composition is skewed to low complexity. The span at 602 to 619 (QHRRRSSSKVDHKHHYMF) shows a compositional bias: basic residues.

Belongs to the protein kinase superfamily. Ser/Thr protein kinase family. WNK subfamily.

It carries out the reaction L-seryl-[protein] + ATP = O-phospho-L-seryl-[protein] + ADP + H(+). It catalyses the reaction L-threonyl-[protein] + ATP = O-phospho-L-threonyl-[protein] + ADP + H(+). The protein is Probable serine/threonine-protein kinase WNK8 (WNK8) of Oryza sativa subsp. japonica (Rice).